The sequence spans 266 residues: MSRTYTTTAIVLKATPLGEADRLLTLLSPDQGLLRVVATGARKPRSKLGGRTALFVVGDCLIACGKSLDRLQQVETLTSHTALSGDLARLAAAQYLTELVLAQALERHPQPELFALLCRDLARIETQSGLEVLPYLLQSTWQLLAWAGWAPQTHYCCLTQQAVQPRLEQSRWRVRYSPSLGGVLADTAAYQRRPNQRELLLTATELAALQQIPTSQTVLPLASLPREAWQMLERALRHSAEYHLERPLQSALLLETLLTGSHVASV.

The protein belongs to the RecO family.

Functionally, involved in DNA repair and RecF pathway recombination. This Synechococcus elongatus (strain ATCC 33912 / PCC 7942 / FACHB-805) (Anacystis nidulans R2) protein is DNA repair protein RecO.